The following is a 258-amino-acid chain: Phosphate import ATP-binding protein PstB (258 aa).

The ABC transporter domain maps to 5-247 (IDISGLSAFY…ERIFSNPSVQ (243 aa)). Residue 37 to 44 (GPSGCGKS) coordinates ATP.

This sequence belongs to the ABC transporter superfamily. Phosphate importer (TC 3.A.1.7) family. In terms of assembly, the complex is composed of two ATP-binding proteins (PstB), two transmembrane proteins (PstC and PstA) and a solute-binding protein (PstS).

Its subcellular location is the cell membrane. It carries out the reaction phosphate(out) + ATP + H2O = ADP + 2 phosphate(in) + H(+). In terms of biological role, part of the ABC transporter complex PstSACB involved in phosphate import. Responsible for energy coupling to the transport system. The sequence is that of Phosphate import ATP-binding protein PstB from Streptomyces griseus.